The sequence spans 127 residues: Protein P6 (127 aa).

Its subcellular location is the virion membrane. This chain is Protein P6 (VI), found in Pseudoalteromonas espejiana (Bacteriophage PM2).